Here is a 321-residue protein sequence, read N- to C-terminus: Probable heme-iron transport system permease protein IsdF (321 aa).

9 helical membrane-spanning segments follow: residues 9 to 29 (LLFLCLLVILIATAYISFVTG), 61 to 81 (ILIALMVGAMLAVSGALLQAA), 89 to 109 (ANIIGVSSGALIMRALCMLFI), 114 to 134 (FYLPLLSFIGGLIPFLIIILL), 143 to 163 (VSMILVGVALFVLLNGVLEIL), 179 to 199 (IWSDVYILAVSALLGLILTLL), 233 to 253 (VFLASATVAIVGQLAFLGIIV), 267 to 287 (LIPFSTVIGAWLLLVADLLGR), and 294 to 314 (EIPANAILMIVGGPMLIYLIC).

The protein belongs to the binding-protein-dependent transport system permease family. FecCD subfamily.

The protein localises to the cell membrane. In terms of biological role, part of the binding-protein-dependent transport system for heme-iron. Responsible for the translocation of the substrate across the membrane. The protein is Probable heme-iron transport system permease protein IsdF (isdF) of Staphylococcus aureus (strain NCTC 8325 / PS 47).